The chain runs to 181 residues: Adenine phosphoribosyltransferase (181 aa).

Belongs to the purine/pyrimidine phosphoribosyltransferase family. As to quaternary structure, homodimer.

It is found in the cytoplasm. It carries out the reaction AMP + diphosphate = 5-phospho-alpha-D-ribose 1-diphosphate + adenine. It functions in the pathway purine metabolism; AMP biosynthesis via salvage pathway; AMP from adenine: step 1/1. Catalyzes a salvage reaction resulting in the formation of AMP, that is energically less costly than de novo synthesis. The protein is Adenine phosphoribosyltransferase of Rhodopseudomonas palustris (strain BisB5).